Reading from the N-terminus, the 359-residue chain is DNA integrity scanning protein DisA (359 aa).

The DAC domain maps to 10–148 (ELDLLDIVQF…GNRRYTLKDI (139 aa)). ATP contacts are provided by residues G77, L95, and 108-112 (MRHRT).

The protein belongs to the DisA family. In terms of assembly, homooctamer. Mg(2+) serves as cofactor.

It carries out the reaction 2 ATP = 3',3'-c-di-AMP + 2 diphosphate. Participates in a DNA-damage check-point that is active prior to asymmetric division when DNA is damaged. DisA forms globular foci that rapidly scan along the chromosomes during sporulation, searching for lesions. When a lesion is present, DisA pauses at the lesion site. This triggers a cellular response that culminates in a temporary block in sporulation initiation. Its function is as follows. Also has diadenylate cyclase activity, catalyzing the condensation of 2 ATP molecules into cyclic di-AMP (c-di-AMP). c-di-AMP acts as a signaling molecule that couples DNA integrity with progression of sporulation. The rise in c-di-AMP level generated by DisA while scanning the chromosome, operates as a positive signal that advances sporulation; upon encountering a lesion, the DisA focus arrests at the damaged site and halts c-di-AMP synthesis. The polypeptide is DNA integrity scanning protein DisA (Bacillus pumilus (strain SAFR-032)).